A 496-amino-acid polypeptide reads, in one-letter code: RNA-binding motif protein, Y chromosome, family 1 member D (496 aa).

The RRM domain occupies Gly8–Lys85. Disordered regions lie at residues Asp67–Tyr349 and Lys452–Tyr496. Composition is skewed to low complexity over residues Pro97 to Gly114 and Pro149 to Gly159. Over residues Asn175–Met184 the composition is skewed to polar residues. Composition is skewed to basic and acidic residues over residues Arg204–Gly214, Asp242–Ser253, Ala276–Tyr289, Gly313–Tyr326, Ser335–Tyr349, and Gly484–Tyr496.

In terms of assembly, interacts with splicing factor proteins SFRS3/SRP20, TRA2B/SFRS10, KHDRBS1/SAM68 and KHDRBS3. In terms of tissue distribution, testis-specific.

The protein resides in the nucleus. Its function is as follows. RNA-binding protein which may be involved in spermatogenesis. Required for sperm development, possibly by participating in pre-mRNA splicing in the testis. This chain is RNA-binding motif protein, Y chromosome, family 1 member D (RBMY1D), found in Homo sapiens (Human).